We begin with the raw amino-acid sequence, 122 residues long: Large ribosomal subunit protein uL14 (122 aa).

It belongs to the universal ribosomal protein uL14 family. As to quaternary structure, part of the 50S ribosomal subunit. Forms a cluster with proteins L3 and L19. In the 70S ribosome, L14 and L19 interact and together make contacts with the 16S rRNA in bridges B5 and B8.

Binds to 23S rRNA. Forms part of two intersubunit bridges in the 70S ribosome. This is Large ribosomal subunit protein uL14 from Pelagibacter ubique (strain HTCC1062).